The primary structure comprises 87 residues: Small ribosomal subunit protein uS15 (87 aa).

Belongs to the universal ribosomal protein uS15 family. As to quaternary structure, part of the 30S ribosomal subunit. Forms a bridge to the 50S subunit in the 70S ribosome, contacting the 23S rRNA.

In terms of biological role, one of the primary rRNA binding proteins, it binds directly to 16S rRNA where it helps nucleate assembly of the platform of the 30S subunit by binding and bridging several RNA helices of the 16S rRNA. Its function is as follows. Forms an intersubunit bridge (bridge B4) with the 23S rRNA of the 50S subunit in the ribosome. The sequence is that of Small ribosomal subunit protein uS15 from Clostridium kluyveri (strain NBRC 12016).